Here is a 315-residue protein sequence, read N- to C-terminus: MSESLRIIFAGTPDFAARHLDALLSSSHQVVGVFTQPDRPAGRGKKLMPGPVKVLAQENDIPVFQPKSLRSAENQELVAALNADVMVVVAYGLILPEAVLSMPRLGCINVHGSLLPRWRGAAPIQRSLWAGDAETGVTIMQMDKGLDTGDMLRKLSCPITADDTSASLYDKLAQLGPQGLLATLEDLAAGRAVPEKQDDAQATYADKLSKEEARLDWTLSAAQLERCIRAFNPWPVSFFMIDEQPVKVWKASVIRQQSHATPGTILDAGKQGIQVATTDGILNLESLQPAGKKPMSAQDLLNSRREWFTPGAILA.

113–116 (SLLP) contacts (6S)-5,6,7,8-tetrahydrofolate.

It belongs to the Fmt family.

The enzyme catalyses L-methionyl-tRNA(fMet) + (6R)-10-formyltetrahydrofolate = N-formyl-L-methionyl-tRNA(fMet) + (6S)-5,6,7,8-tetrahydrofolate + H(+). Its function is as follows. Attaches a formyl group to the free amino group of methionyl-tRNA(fMet). The formyl group appears to play a dual role in the initiator identity of N-formylmethionyl-tRNA by promoting its recognition by IF2 and preventing the misappropriation of this tRNA by the elongation apparatus. The polypeptide is Methionyl-tRNA formyltransferase (Cronobacter sakazakii (strain ATCC BAA-894) (Enterobacter sakazakii)).